A 301-amino-acid polypeptide reads, in one-letter code: Homoserine O-acetyltransferase (301 aa).

The active-site Acyl-thioester intermediate is C142. Substrate-binding residues include K163 and S192. H235 (proton acceptor) is an active-site residue. E237 is an active-site residue. Position 249 (R249) interacts with substrate.

It belongs to the MetA family.

The protein localises to the cytoplasm. It carries out the reaction L-homoserine + acetyl-CoA = O-acetyl-L-homoserine + CoA. Its pathway is amino-acid biosynthesis; L-methionine biosynthesis via de novo pathway; O-acetyl-L-homoserine from L-homoserine: step 1/1. Functionally, transfers an acetyl group from acetyl-CoA to L-homoserine, forming acetyl-L-homoserine. This is Homoserine O-acetyltransferase from Bacillus subtilis (strain 168).